The primary structure comprises 545 residues: Mitogen-activated protein kinase kinase kinase mom-4 (545 aa).

The segment covering 1 to 21 has biased composition (low complexity); the sequence is MDTSPHSKPSSSSASQSSHSP. A disordered region spans residues 1-35; sequence MDTSPHSKPSSSSASQSSHSPSPAPVTAPRKTRDS. The Protein kinase domain maps to 53-308; that stretch reads NLNSHQLGRG…AECLQYFTAL (256 aa). ATP is bound by residues 59-67 and Lys86; that span reads LGRGTYGIV. Asp178 (proton acceptor) is an active-site residue. A disordered region spans residues 316 to 444; it reads NVPLADANTN…PIDDRRDSNE (129 aa). 2 stretches are compositionally biased toward polar residues: residues 352-369 and 396-411; these read NGRT…QAVN and ASSS…QSEA.

The protein belongs to the protein kinase superfamily. STE Ser/Thr protein kinase family. MAP kinase kinase kinase subfamily. Interacts with, and is activated by, tap-1. Mg(2+) is required as a cofactor.

The catalysed reaction is L-seryl-[protein] + ATP = O-phospho-L-seryl-[protein] + ADP + H(+). It catalyses the reaction L-threonyl-[protein] + ATP = O-phospho-L-threonyl-[protein] + ADP + H(+). Its function is as follows. Part of the Wnt signaling pathway essential for the specification of the mesodermal cell fate in early embryos. Stimulates the wrm-1/lit-1-dependent phosphorylation of pop-1 and plays a role in the initial nuclear accumulation of wrm-1. This Caenorhabditis briggsae protein is Mitogen-activated protein kinase kinase kinase mom-4.